The sequence spans 104 residues: Phosphoribosyl-ATP pyrophosphatase (104 aa).

The protein belongs to the PRA-PH family.

Its subcellular location is the cytoplasm. It carries out the reaction 1-(5-phospho-beta-D-ribosyl)-ATP + H2O = 1-(5-phospho-beta-D-ribosyl)-5'-AMP + diphosphate + H(+). It participates in amino-acid biosynthesis; L-histidine biosynthesis; L-histidine from 5-phospho-alpha-D-ribose 1-diphosphate: step 2/9. In Streptococcus sanguinis (strain SK36), this protein is Phosphoribosyl-ATP pyrophosphatase.